The following is a 201-amino-acid chain: Recombination protein RecR (201 aa).

A C4-type zinc finger spans residues 57-72; it reads CADCRTFTEQDVCNIC. The 96-residue stretch at 81 to 176 folds into the Toprim domain; the sequence is GQICVVESPA…EASRIAHGVP (96 aa).

Belongs to the RecR family.

In terms of biological role, may play a role in DNA repair. It seems to be involved in an RecBC-independent recombinational process of DNA repair. It may act with RecF and RecO. This is Recombination protein RecR from Citrobacter koseri (strain ATCC BAA-895 / CDC 4225-83 / SGSC4696).